The chain runs to 101 residues: Ubiquitin-related modifier 1 (101 aa).

A 1-thioglycine modification is found at Gly101. Residue Gly101 forms a Glycyl lysine isopeptide (Gly-Lys) (interchain with K-? in acceptor proteins) linkage.

It belongs to the URM1 family. In terms of processing, C-terminal thiocarboxylation occurs in 2 steps, it is first acyl-adenylated (-COAMP) via the hesA/moeB/thiF part of UBA4, then thiocarboxylated (-COSH) via the rhodanese domain of UBA4.

It is found in the cytoplasm. It participates in tRNA modification; 5-methoxycarbonylmethyl-2-thiouridine-tRNA biosynthesis. In terms of biological role, acts as a sulfur carrier required for 2-thiolation of mcm(5)S(2)U at tRNA wobble positions of cytosolic tRNA(Lys), tRNA(Glu) and tRNA(Gln). Serves as sulfur donor in tRNA 2-thiolation reaction by being thiocarboxylated (-COSH) at its C-terminus by the MOCS3 homolog UBA4. The sulfur is then transferred to tRNA to form 2-thiolation of mcm(5)S(2)U. Prior mcm(5) tRNA modification by the elongator complex is required for 2-thiolation. Also acts as a ubiquitin-like protein (UBL) that is covalently conjugated via an isopeptide bond to lysine residues of target proteins such as AHP1. The thiocarboxylated form serves as substrate for conjugation and oxidative stress specifically induces the formation of UBL-protein conjugates. This Candida albicans (strain SC5314 / ATCC MYA-2876) (Yeast) protein is Ubiquitin-related modifier 1.